The following is a 396-amino-acid chain: Purine ribonucleoside efflux pump NepI (396 aa).

Over 1–21 (MSEFIAENRGANAITRPNWSA) the chain is Cytoplasmic. A helical transmembrane segment spans residues 22–42 (VFSVAFCVACLIIVEFLPVSL). The Periplasmic segment spans residues 43–54 (LTPMAQDLGISE). Residues 55–75 (GVAGQSVTVTAFVAMFASLFI) traverse the membrane as a helical segment. Residues 76–85 (TQTIQATDRR) are Cytoplasmic-facing. A helical transmembrane segment spans residues 86–106 (YVVILFAVLLTLSCLLVSFAN). Position 107 (Ser-107) is a topological domain, periplasmic. Residues 108–128 (FSLLLIGRACLGVALGGFWAI) form a helical membrane-spanning segment. The Cytoplasmic portion of the chain corresponds to 129 to 147 (SASLTMRLVPPRTVPKALS). The chain crosses the membrane as a helical span at residues 148–168 (VIFGAVSIALVIAAPLGSFLG). The Periplasmic portion of the chain corresponds to 169–175 (ELIGWRN). The chain crosses the membrane as a helical span at residues 176 to 196 (VFNAAAAMGVLCIFWIIKSLP). Topologically, residues 197–215 (SLPGEPSHQKQNTFRLLQR) are cytoplasmic. A helical transmembrane segment spans residues 216–236 (PGVMAGMIAIFMSFAGQFAFF). At 237–255 (TYIRPVYMNLAGFGVDGLT) the chain is on the periplasmic side. The chain crosses the membrane as a helical span at residues 256–276 (LVLLSFGIASFVGTSLSSFIL). Over 277–281 (KRSVK) the chain is Cytoplasmic. Residues 282–302 (LALAGAPFVLALSALVLTLWG) traverse the membrane as a helical segment. Residues 303-305 (SDK) are Periplasmic-facing. Residues 306–326 (IVATGVAIIWGLTFALIPVGW) traverse the membrane as a helical segment. Residues 327–343 (STWITRSLADQAEKAGS) are Cytoplasmic-facing. The helical transmembrane segment at 344 to 364 (IQVAVIQLANTCGAAIGGYAL) threads the bilayer. Residues 365–366 (DN) are Periplasmic-facing. Residues 367-387 (IGLTSPLMLSGTLMLLTALLV) traverse the membrane as a helical segment. Residues 388–396 (TAKVKMKKS) lie on the Cytoplasmic side of the membrane.

Belongs to the major facilitator superfamily. DHA1 family. NepI (TC 2.A.1.2.26) subfamily.

The protein resides in the cell inner membrane. The catalysed reaction is inosine(in) + H(+)(out) = inosine(out) + H(+)(in). It carries out the reaction guanosine(in) + H(+)(out) = guanosine(out) + H(+)(in). Functionally, involved in the efflux of purine ribonucleosides, such as inosine and guanosine. The chain is Purine ribonucleoside efflux pump NepI from Escherichia coli O6:K15:H31 (strain 536 / UPEC).